A 612-amino-acid chain; its full sequence is Threonine--tRNA ligase (612 aa).

Residues 218–509 are catalytic; the sequence is DHRKLGVELG…LSEHFGGNFP (292 aa). Zn(2+) is bound by residues cysteine 310, histidine 361, and histidine 486.

This sequence belongs to the class-II aminoacyl-tRNA synthetase family. As to quaternary structure, homodimer. It depends on Zn(2+) as a cofactor.

The protein resides in the cytoplasm. It catalyses the reaction tRNA(Thr) + L-threonine + ATP = L-threonyl-tRNA(Thr) + AMP + diphosphate + H(+). Functionally, catalyzes the attachment of threonine to tRNA(Thr) in a two-step reaction: L-threonine is first activated by ATP to form Thr-AMP and then transferred to the acceptor end of tRNA(Thr). Also edits incorrectly charged L-seryl-tRNA(Thr). The chain is Threonine--tRNA ligase from Helicobacter pylori (strain HPAG1).